Here is a 183-residue protein sequence, read N- to C-terminus: NADH-quinone oxidoreductase subunit I (183 aa).

4Fe-4S ferredoxin-type domains lie at 71–100 (KRDE…MKAA) and 117–146 (EIYE…LTTS). Positions 80, 83, 86, 90, 126, 129, 132, and 136 each coordinate [4Fe-4S] cluster.

The protein belongs to the complex I 23 kDa subunit family. NDH-1 is composed of 14 different subunits. Subunits NuoA, H, J, K, L, M, N constitute the membrane sector of the complex. Requires [4Fe-4S] cluster as cofactor.

It is found in the cell inner membrane. It catalyses the reaction a quinone + NADH + 5 H(+)(in) = a quinol + NAD(+) + 4 H(+)(out). Functionally, NDH-1 shuttles electrons from NADH, via FMN and iron-sulfur (Fe-S) centers, to quinones in the respiratory chain. The immediate electron acceptor for the enzyme in this species is believed to be ubiquinone. Couples the redox reaction to proton translocation (for every two electrons transferred, four hydrogen ions are translocated across the cytoplasmic membrane), and thus conserves the redox energy in a proton gradient. The polypeptide is NADH-quinone oxidoreductase subunit I (Flavobacterium psychrophilum (strain ATCC 49511 / DSM 21280 / CIP 103535 / JIP02/86)).